We begin with the raw amino-acid sequence, 260 residues long: MAFVPPQAGYDRAITVFSPDGRLFQVNYAREAVKRGATAVGVKWKGGVVLAVEKRITSRLIEPSSYEKIFQIDDHIAAAPSGIIADARVLVDRARLEAQIYRLTYGEPVPLTVLVKKICDLKQAHTQYGGVRPFGAALLMAGVNEKPELYETDPSGAYFEWKAVAIGSGRNTAMAIFEEHYSDDIDMEGAIKLAILALAKTLEEPSPESIEVAYITLDEKRWKKLDKEEVAKYLNEILEEIKEEEVEEREEDYSELDQNY.

The protein belongs to the peptidase T1A family. In terms of assembly, the 20S proteasome core is composed of 14 alpha and 14 beta subunits that assemble into four stacked heptameric rings, resulting in a barrel-shaped structure. The two inner rings, each composed of seven catalytic beta subunits, are sandwiched by two outer rings, each composed of seven alpha subunits. The catalytic chamber with the active sites is on the inside of the barrel. Has a gated structure, the ends of the cylinder being occluded by the N-termini of the alpha-subunits. Is capped at one or both ends by the proteasome regulatory ATPase, PAN.

It localises to the cytoplasm. The formation of the proteasomal ATPase PAN-20S proteasome complex, via the docking of the C-termini of PAN into the intersubunit pockets in the alpha-rings, triggers opening of the gate for substrate entry. Interconversion between the open-gate and close-gate conformations leads to a dynamic regulation of the 20S proteasome proteolysis activity. Component of the proteasome core, a large protease complex with broad specificity involved in protein degradation. The chain is Proteasome subunit alpha from Thermococcus gammatolerans (strain DSM 15229 / JCM 11827 / EJ3).